Reading from the N-terminus, the 208-residue chain is Uracil phosphoribosyltransferase (208 aa).

5-phospho-alpha-D-ribose 1-diphosphate contacts are provided by residues R78, R103, and 130-138 (DPMLATGGS). Uracil-binding positions include I193 and 198-200 (GDA). D199 lines the 5-phospho-alpha-D-ribose 1-diphosphate pocket.

The protein belongs to the UPRTase family. Mg(2+) is required as a cofactor.

It carries out the reaction UMP + diphosphate = 5-phospho-alpha-D-ribose 1-diphosphate + uracil. It functions in the pathway pyrimidine metabolism; UMP biosynthesis via salvage pathway; UMP from uracil: step 1/1. Its activity is regulated as follows. Allosterically activated by GTP. Catalyzes the conversion of uracil and 5-phospho-alpha-D-ribose 1-diphosphate (PRPP) to UMP and diphosphate. The sequence is that of Uracil phosphoribosyltransferase from Desulfovibrio desulfuricans (strain ATCC 27774 / DSM 6949 / MB).